Consider the following 160-residue polypeptide: Small ribosomal subunit protein uS9 (160 aa).

The protein belongs to the universal ribosomal protein uS9 family.

The protein is Small ribosomal subunit protein uS9 of Cereibacter sphaeroides (strain ATCC 17029 / ATH 2.4.9) (Rhodobacter sphaeroides).